Reading from the N-terminus, the 161-residue chain is Regulator of ribonuclease activity A (161 aa).

It belongs to the RraA family. In terms of assembly, homotrimer. Binds to both RNA-binding sites in the C-terminal region of Rne and to RhlB.

The protein resides in the cytoplasm. Globally modulates RNA abundance by binding to RNase E (Rne) and regulating its endonucleolytic activity. Can modulate Rne action in a substrate-dependent manner by altering the composition of the degradosome. Modulates RNA-binding and helicase activities of the degradosome. In Shigella dysenteriae serotype 1 (strain Sd197), this protein is Regulator of ribonuclease activity A.